The primary structure comprises 86 residues: High affinity immunoglobulin epsilon receptor subunit gamma (86 aa).

The first 18 residues, 1-18 (MISAVILFLLLLVEQAAA), serve as a signal peptide directing secretion. Residues 19-23 (LGEPQ) lie on the Extracellular side of the membrane. A helical transmembrane segment spans residues 24–44 (LCYILDAVLFLYGIVLTLLYC). The Cytoplasmic segment spans residues 45 to 86 (RLKIQVRKAAIASREKADAVYTGLNTRSQETYETLKHEKPPQ). An ITAM domain is found at 54 to 82 (AIASREKADAVYTGLNTRSQETYETLKHE). Residues Tyr-65 and Tyr-76 each carry the phosphotyrosine modification. Residue Thr-78 is modified to Phosphothreonine.

This sequence belongs to the CD3Z/FCER1G family. In terms of assembly, igE Fc receptor is a tetramer of an alpha chain, a beta chain, and two disulfide linked gamma chains. Associates with FCGR1A; forms a functional signaling complex. The signaling subunit of immunoglobulin gamma (IgG) Fc receptor complex. As a homodimer or a heterodimer of CD247 and FCER1G, associates with the ligand binding subunit FCGR3A to form a functional receptor complex. Associates with CLEC6A. Interacts with CLEC4E. Interacts (via ITAM domain) with SYK (via SH2 domains); activates SYK, enabling integrin-mediated activation of neutrophils and macrophages. Interacts with CSF2RB and recruits SYK in response to IL3 stimulation; this interaction is direct. Interacts with CD300LH; the interaction may be indirect. Interacts with CD300LD. Interacts with TARM1. Expressed in mast cells (at protein level). Expressed in basophils (at protein level).

Its subcellular location is the cell membrane. Its function is as follows. Adapter protein containing an immunoreceptor tyrosine-based activation motif (ITAM) that transduces activation signals from various immunoreceptors. As a component of the high-affinity immunoglobulin E (IgE) receptor, mediates allergic inflammatory signaling in mast cells. As a constitutive component of interleukin-3 receptor complex, selectively mediates interleukin 4/IL4 production by basophils, priming T-cells toward effector T-helper 2 subset. Associates with pattern recognition receptors CLEC4D and CLEC4E to form a functional signaling complex in myeloid cells. Binding of mycobacterial trehalose 6,6'-dimycolate (TDM) to this receptor complex leads to phosphorylation of ITAM, triggering activation of SYK, CARD9 and NF-kappa-B, consequently driving maturation of antigen-presenting cells and shaping antigen-specific priming of T-cells toward effector T-helper 1 and T-helper 17 cell subtypes. May function cooperatively with other activating receptors. Functionally linked to integrin beta-2/ITGB2-mediated neutrophil activation. Also involved in integrin alpha-2/ITGA2-mediated platelet activation. This is High affinity immunoglobulin epsilon receptor subunit gamma from Mus musculus (Mouse).